The chain runs to 313 residues: Porphobilinogen deaminase (313 aa).

Cys242 bears the S-(dipyrrolylmethanemethyl)cysteine mark.

The protein belongs to the HMBS family. As to quaternary structure, monomer. Dipyrromethane is required as a cofactor.

It catalyses the reaction 4 porphobilinogen + H2O = hydroxymethylbilane + 4 NH4(+). It participates in porphyrin-containing compound metabolism; protoporphyrin-IX biosynthesis; coproporphyrinogen-III from 5-aminolevulinate: step 2/4. In terms of biological role, tetrapolymerization of the monopyrrole PBG into the hydroxymethylbilane pre-uroporphyrinogen in several discrete steps. This chain is Porphobilinogen deaminase, found in Escherichia coli O17:K52:H18 (strain UMN026 / ExPEC).